The following is a 242-amino-acid chain: Serine hydrolase cnsH (242 aa).

Active-site charge relay system residues include S56, D138, and H216.

This sequence belongs to the AB hydrolase 3 family.

The protein operates within alkaloid biosynthesis. Its function is as follows. Serine hydrolase; part of the gene cluster that mediates the biosynthesis of communesins, a prominent class of indole alkaloids with great potential as pharmaceuticals. Communesins are biosynthesized by the coupling of tryptamine and aurantioclavine, two building blocks derived from L-tryptophan. The L-tryptophan decarboxylase cnsB converts L-tryptophan to tryptamine, whereas the tryptophan dimethylallyltransferase cnsF converts L-tryptophan to 4-dimethylallyl tryptophan which is further transformed to aurantioclavine by the aurantioclavine synthase cnsA, probably aided by the catalase cnsD. The cytochrome P450 monooxygenase cnsC catalyzes the heterodimeric coupling between the two different indole moieties, tryptamine and aurantioclavine, to construct vicinal quaternary stereocenters and yield the heptacyclic communesin scaffold. The O-methyltransferase cnsE then methylates the communesin scaffold to produce communesin K, the simplest characterized communesin that contains the heptacyclic core. The dioxygenase cnsJ converts communesin K into communesin I. Acylation to introduce the hexadienyl group at position N16 of communesin I by the acyltransferase cnsK leads to the production of communesin B. The hexadienyl group is produced by the highly reducing polyketide synthase cnsI, before being hydrolytically removed from cnsI by the serine hydrolase cnsH, converted into hexadienyl-CoA by the CoA ligase cnsG, and then transferred to communesin I by cnsK. Surprisingly, cnsK may also be a promiscuous acyltransferase that can tolerate a range of acyl groups, including acetyl-, propionyl-, and butyryl-CoA, which lead to communesins A, G and H respectively. The roles of the alpha-ketoglutarate-dependent dioxygenases cnsM and cnsP have still to be determined. This is Serine hydrolase cnsH from Penicillium expansum (Blue mold rot fungus).